The following is a 395-amino-acid chain: Phosphopentomutase (395 aa).

Asp14, Asp289, His294, Asp330, His331, and His342 together coordinate Mn(2+).

It belongs to the phosphopentomutase family. Requires Mn(2+) as cofactor.

The protein resides in the cytoplasm. It carries out the reaction 2-deoxy-alpha-D-ribose 1-phosphate = 2-deoxy-D-ribose 5-phosphate. It catalyses the reaction alpha-D-ribose 1-phosphate = D-ribose 5-phosphate. It participates in carbohydrate degradation; 2-deoxy-D-ribose 1-phosphate degradation; D-glyceraldehyde 3-phosphate and acetaldehyde from 2-deoxy-alpha-D-ribose 1-phosphate: step 1/2. Isomerase that catalyzes the conversion of deoxy-ribose 1-phosphate (dRib-1-P) and ribose 1-phosphate (Rib-1-P) to deoxy-ribose 5-phosphate (dRib-5-P) and ribose 5-phosphate (Rib-5-P), respectively. The sequence is that of Phosphopentomutase from Mycoplasmopsis pulmonis (strain UAB CTIP) (Mycoplasma pulmonis).